The following is a 205-amino-acid chain: Small ribosomal subunit protein uS4 (205 aa).

Residues M1–G16 show a composition bias toward basic and acidic residues. Residues M1–S46 are disordered. In terms of domain architecture, S4 RNA-binding spans S94–V157.

It belongs to the universal ribosomal protein uS4 family. In terms of assembly, part of the 30S ribosomal subunit. Contacts protein S5. The interaction surface between S4 and S5 is involved in control of translational fidelity.

Functionally, one of the primary rRNA binding proteins, it binds directly to 16S rRNA where it nucleates assembly of the body of the 30S subunit. Its function is as follows. With S5 and S12 plays an important role in translational accuracy. The sequence is that of Small ribosomal subunit protein uS4 from Rhizobium etli (strain CIAT 652).